We begin with the raw amino-acid sequence, 175 residues long: RNA pyrophosphohydrolase (175 aa).

A Nudix hydrolase domain is found at 6–150 (GFRPNVGIVI…KREVYRRVMK (145 aa)). The Nudix box motif lies at 38–59 (GGVDDGETPEQAMYRELYEEIG).

Belongs to the Nudix hydrolase family. RppH subfamily. The cofactor is a divalent metal cation.

In terms of biological role, accelerates the degradation of transcripts by removing pyrophosphate from the 5'-end of triphosphorylated RNA, leading to a more labile monophosphorylated state that can stimulate subsequent ribonuclease cleavage. This chain is RNA pyrophosphohydrolase, found in Aeromonas hydrophila subsp. hydrophila (strain ATCC 7966 / DSM 30187 / BCRC 13018 / CCUG 14551 / JCM 1027 / KCTC 2358 / NCIMB 9240 / NCTC 8049).